Here is a 299-residue protein sequence, read N- to C-terminus: Oxygen-dependent coproporphyrinogen-III oxidase (299 aa).

Substrate is bound at residue serine 92. 2 residues coordinate a divalent metal cation: histidine 96 and histidine 106. The active-site Proton donor is the histidine 106. Substrate is bound at residue 108 to 110 (NVR). A divalent metal cation is bound by residues histidine 145 and histidine 175. The segment at 240 to 275 (YVEFNLVWDRGTLFGLQTGGRTESILMSMPPLVRWE) is important for dimerization. 258-260 (GGR) lines the substrate pocket.

The protein belongs to the aerobic coproporphyrinogen-III oxidase family. Homodimer. Requires a divalent metal cation as cofactor.

The protein localises to the cytoplasm. The enzyme catalyses coproporphyrinogen III + O2 + 2 H(+) = protoporphyrinogen IX + 2 CO2 + 2 H2O. It functions in the pathway porphyrin-containing compound metabolism; protoporphyrin-IX biosynthesis; protoporphyrinogen-IX from coproporphyrinogen-III (O2 route): step 1/1. Its function is as follows. Involved in the heme biosynthesis. Catalyzes the aerobic oxidative decarboxylation of propionate groups of rings A and B of coproporphyrinogen-III to yield the vinyl groups in protoporphyrinogen-IX. The protein is Oxygen-dependent coproporphyrinogen-III oxidase of Shigella flexneri.